Here is a 706-residue protein sequence, read N- to C-terminus: Cyclic nucleotide-gated ion channel 18 (706 aa).

At Met-1–His-53 the chain is on the cytoplasmic side. Residues Val-54–Tyr-74 form a helical membrane-spanning segment. The Extracellular segment spans residues Val-75 to Ser-86. A helical transmembrane segment spans residues Leu-87–Phe-107. Residues Met-108–Asp-142 lie on the Cytoplasmic side of the membrane. The chain crosses the membrane as a helical span at residues Phe-143–Pro-163. Residues Ala-164–Asn-174 lie on the Extracellular side of the membrane. Residues Ser-175–Leu-195 form a helical membrane-spanning segment. Topologically, residues Asn-196–Asn-217 are cytoplasmic. The chain crosses the membrane as a helical span at residues Leu-218 to Gly-238. Residues Arg-239–Thr-345 lie on the Extracellular side of the membrane. A helical membrane pass occupies residues Leu-346–Met-366. Topologically, residues Gln-367 to Val-706 are cytoplasmic. Residues Phe-449–Tyr-579 and Glu-520 contribute to the a nucleoside 3',5'-cyclic phosphate site. Residues Phe-565 to Tyr-580 are calmodulin-binding. The 30-residue stretch at Arg-585–Ser-614 folds into the IQ domain. Residues Ala-661–Val-706 are disordered. A compositionally biased stretch (basic and acidic residues) spans Lys-693–Val-706.

This sequence belongs to the cyclic nucleotide-gated cation channel (TC 1.A.1.5) family. Homomultimer. Interacts with CPK32. In terms of tissue distribution, expressed in pollen grains. Not detected in leaves, roots or root hairs.

Its subcellular location is the cell membrane. It is found in the cytoplasmic vesicle membrane. In terms of biological role, cyclic nucleotide-gated ion channel required for directional pollen tube growth into the transmitting tract. Acts as a Ca(2+)-permeable divalent cation-selective channel inhibited by either lanthanum or gadolinium. Regulated by CPK32 to mediate Ca(2+) transport across the plasma membrane in response to Ca(2+) oscillation. This is Cyclic nucleotide-gated ion channel 18 from Arabidopsis thaliana (Mouse-ear cress).